The primary structure comprises 498 residues: ATP synthase subunit beta, chloroplastic (498 aa).

ATP is bound at residue 172–179; it reads GGAGVGKT.

This sequence belongs to the ATPase alpha/beta chains family. In terms of assembly, F-type ATPases have 2 components, CF(1) - the catalytic core - and CF(0) - the membrane proton channel. CF(1) has five subunits: alpha(3), beta(3), gamma(1), delta(1), epsilon(1). CF(0) has four main subunits: a(1), b(1), b'(1) and c(9-12).

Its subcellular location is the plastid. The protein resides in the chloroplast thylakoid membrane. The enzyme catalyses ATP + H2O + 4 H(+)(in) = ADP + phosphate + 5 H(+)(out). In terms of biological role, produces ATP from ADP in the presence of a proton gradient across the membrane. The catalytic sites are hosted primarily by the beta subunits. The chain is ATP synthase subunit beta, chloroplastic from Calycanthus floridus var. glaucus (Eastern sweetshrub).